Reading from the N-terminus, the 122-residue chain is Large ribosomal subunit protein uL14 (122 aa).

Belongs to the universal ribosomal protein uL14 family. In terms of assembly, part of the 50S ribosomal subunit. Forms a cluster with proteins L3 and L19. In the 70S ribosome, L14 and L19 interact and together make contacts with the 16S rRNA in bridges B5 and B8.

Functionally, binds to 23S rRNA. Forms part of two intersubunit bridges in the 70S ribosome. The sequence is that of Large ribosomal subunit protein uL14 from Staphylococcus carnosus (strain TM300).